The chain runs to 84 residues: MVKLDPSSLGLAIFGCAIGMALAALGCGIGQGLGLKGACEGIARNPEASGKIQVALILGLAFIESLAIYALVINLIILFANPFV.

The next 2 membrane-spanning stretches (helical) occupy residues 9–29 and 57–77; these read LGLA…GCGI and ILGL…NLII.

It belongs to the ATPase C chain family. In terms of assembly, F-type ATPases have 2 components, F(1) - the catalytic core - and F(0) - the membrane proton channel. F(1) has five subunits: alpha(3), beta(3), gamma(1), delta(1), epsilon(1). F(0) has three main subunits: a(1), b(2) and c(10-14). The alpha and beta chains form an alternating ring which encloses part of the gamma chain. F(1) is attached to F(0) by a central stalk formed by the gamma and epsilon chains, while a peripheral stalk is formed by the delta and b chains.

It localises to the cell membrane. F(1)F(0) ATP synthase produces ATP from ADP in the presence of a proton or sodium gradient. F-type ATPases consist of two structural domains, F(1) containing the extramembraneous catalytic core and F(0) containing the membrane proton channel, linked together by a central stalk and a peripheral stalk. During catalysis, ATP synthesis in the catalytic domain of F(1) is coupled via a rotary mechanism of the central stalk subunits to proton translocation. In terms of biological role, key component of the F(0) channel; it plays a direct role in translocation across the membrane. A homomeric c-ring of between 10-14 subunits forms the central stalk rotor element with the F(1) delta and epsilon subunits. In Lawsonia intracellularis (strain PHE/MN1-00), this protein is ATP synthase subunit c.